Reading from the N-terminus, the 221-residue chain is Cytidylate kinase 1 (221 aa).

Residue 7–15 (GPSASGKSS) coordinates ATP.

This sequence belongs to the cytidylate kinase family. Type 1 subfamily.

The protein resides in the cytoplasm. The catalysed reaction is CMP + ATP = CDP + ADP. It carries out the reaction dCMP + ATP = dCDP + ADP. This is Cytidylate kinase 1 from Borreliella burgdorferi (strain ATCC 35210 / DSM 4680 / CIP 102532 / B31) (Borrelia burgdorferi).